Here is a 300-residue protein sequence, read N- to C-terminus: 33 kDa chaperonin (300 aa).

Cystine bridges form between Cys235–Cys237 and Cys269–Cys272.

It belongs to the HSP33 family. Post-translationally, under oxidizing conditions two disulfide bonds are formed involving the reactive cysteines. Under reducing conditions zinc is bound to the reactive cysteines and the protein is inactive.

The protein resides in the cytoplasm. In terms of biological role, redox regulated molecular chaperone. Protects both thermally unfolding and oxidatively damaged proteins from irreversible aggregation. Plays an important role in the bacterial defense system toward oxidative stress. The chain is 33 kDa chaperonin from Pseudomonas fluorescens (strain ATCC BAA-477 / NRRL B-23932 / Pf-5).